Here is a 240-residue protein sequence, read N- to C-terminus: Probable metal transport system ATP-binding protein TM_0124 (240 aa).

The region spanning 4–223 (VEVKNLTYRI…LKKIFTDFDI (220 aa)) is the ABC transporter domain. 36–43 (GPNGAGKT) contacts ATP.

It belongs to the ABC transporter superfamily.

Its function is as follows. Part of an ATP-driven transport system TM_0123/TM_0124/TM_0125 for a metal. Probably responsible for energy coupling to the transport system. In Thermotoga maritima (strain ATCC 43589 / DSM 3109 / JCM 10099 / NBRC 100826 / MSB8), this protein is Probable metal transport system ATP-binding protein TM_0124.